A 755-amino-acid chain; its full sequence is MAAKRPPASTLKWCQQEMGPICEGIGMVVRSQIGYDGRRIEKQIRRKALQTVVMGGQDVDPLKEPNKTNAPLLSPTLPSTNEALQRARVVAAGIETFAKLMSQGTYPGSAGFTVSETGERKYMKQTSPVQSNIVANLMATADKLSKGVISLAPFPLPTITKLGTWVIANPTAQLPIPPQLKSAIPAIGQIETLIQSILGVQGPVSSVSRAPRKLKLEGVTDQVVLEPETIHATVDVEPIDKTLTKEEAEFLIKAARSVDDDNAETAIFGTQKAKPKVYRPELPKNFEVNLEMGNVHTLTRSNESSVPATRIGRLATFGQLAFGLLGGATAEVTRRTFGIGKRLQEEGIPKNPFLSEANADRIVATLCRVRGAALKLGQMLSIQDSSTVPPALLQIFERVRQSADFMPIKQVHRQMKDAFGDDWREKFEHFDDKPFACASIGQVHKAVLKDGRNVAVKVQYPGVAEGIDSDIDNLVSVLSVGGIFPKGMFLDAFVGVARRELKQECDYEREARAMKKFRELIADWQDVYVPEVIDELSSSRVLTTELVYGKPVDACVEEPQVVRDYIAGKFIELCLKEIFLWRFMQTDPNWSNFFLGKHPKTGEPRLVLLDFGASRAYGKKFVDIYMNIIKSAYDGDKKKIIEYSREIGFLTGYETSVMEDAHVESVMIMGETLASNHPYNFANQDVTMRIQKLIPVMLEHRLTSPPEEIYSLHRKLSGCYLLAAKLKATVSCGGLFHEIHENYVFGEDGIDINID.

The tract at residues Gln-57–Pro-78 is disordered. Over residues Lys-67–Pro-78 the composition is skewed to polar residues. ATP-binding positions include Phe-435 to Val-443 and Lys-457. The active-site Proton acceptor is Asp-587.

The protein belongs to the protein kinase superfamily. ADCK protein kinase family.

It is found in the mitochondrion. It functions in the pathway cofactor biosynthesis; ubiquinone biosynthesis. Atypical kinase involved in the biosynthesis of coenzyme Q, also named ubiquinone, an essential lipid-soluble electron transporter for aerobic cellular respiration. Its substrate specificity is still unclear: may act as a protein kinase that mediates phosphorylation of coq-3. According to other reports, acts as a small molecule kinase, possibly a lipid kinase that phosphorylates a prenyl lipid in the ubiquinone biosynthesis pathway, as suggested by its ability to bind coenzyme Q lipid intermediates. This Caenorhabditis elegans protein is Atypical kinase coq-8, mitochondrial (coq-8).